A 171-amino-acid polypeptide reads, in one-letter code: S-ribosylhomocysteine lyase (171 aa).

Fe cation contacts are provided by His-54, His-58, and Cys-128.

The protein belongs to the LuxS family. As to quaternary structure, homodimer. Fe cation serves as cofactor.

The enzyme catalyses S-(5-deoxy-D-ribos-5-yl)-L-homocysteine = (S)-4,5-dihydroxypentane-2,3-dione + L-homocysteine. Involved in the synthesis of autoinducer 2 (AI-2) which is secreted by bacteria and is used to communicate both the cell density and the metabolic potential of the environment. The regulation of gene expression in response to changes in cell density is called quorum sensing. Catalyzes the transformation of S-ribosylhomocysteine (RHC) to homocysteine (HC) and 4,5-dihydroxy-2,3-pentadione (DPD). This is S-ribosylhomocysteine lyase from Pectobacterium carotovorum subsp. carotovorum (strain PC1).